A 130-amino-acid polypeptide reads, in one-letter code: Small ribosomal subunit protein uS11 (130 aa).

The protein belongs to the universal ribosomal protein uS11 family. As to quaternary structure, part of the 30S ribosomal subunit. Interacts with proteins S7 and S18. Binds to IF-3.

Located on the platform of the 30S subunit, it bridges several disparate RNA helices of the 16S rRNA. Forms part of the Shine-Dalgarno cleft in the 70S ribosome. In Shewanella halifaxensis (strain HAW-EB4), this protein is Small ribosomal subunit protein uS11.